The following is a 415-amino-acid chain: Peptide chain release factor subunit 1-1 (415 aa).

The protein belongs to the eukaryotic release factor 1 family. Heterodimer of two subunits, one of which binds GTP.

Its subcellular location is the cytoplasm. Its function is as follows. Directs the termination of nascent peptide synthesis (translation) in response to the termination codons UAA, UAG and UGA. This is Peptide chain release factor subunit 1-1 from Methanosarcina acetivorans (strain ATCC 35395 / DSM 2834 / JCM 12185 / C2A).